The sequence spans 934 residues: Diacylglycerol kinase theta (934 aa).

Positions 1–50 (MAAAAEPGARTWPGSGSPRLGSPAGSPVLGISGRTRPGSGPERTSRAIGS) are disordered. A phosphoserine mark is found at Ser-22 and Ser-26. Phorbol-ester/DAG-type zinc fingers lie at residues 54–102 (GHSF…KTPC), 115–162 (AHCF…CSDC), and 177–228 (HHHW…APEC). Residues 387 to 486 (TQEILKIYPG…TRFYVAETRA (100 aa)) form the Ras-associating domain. 2 consecutive short sequence motifs (LXXLL motif) follow at residues 547 to 551 (LYMLA) and 566 to 570 (LPDVL). One can recognise a DAGKc domain in the interval 576–713 (PDCCPLLVFV…MDRWTILLDA (138 aa)). Over residues 905–916 (LRKAKQKPRKAG) the composition is skewed to basic residues. A disordered region spans residues 905–934 (LRKAKQKPRKAGANRDTRVDTLPAPEGNPL).

It belongs to the eukaryotic diacylglycerol kinase family. In terms of assembly, interacts with RHOA (constitutively activated, GTP-bound); the interaction inhibits DGKQ. Interacts with PRKCE. Interacts with PRKCH. Interacts with PLCB1. Interacts with NR5A1; the interaction requires both LXXLL motifs in DGKQ and is required for full phosphatidic acid-mediated activation of NR5A1. Phosphorylated by PRKCE and PRKCH in vitro. In terms of tissue distribution, widely expressed in all brain regions, including the cortex and hippocampus with a specific expression in neuronal cells (at protein level).

The protein localises to the cytoplasm. It localises to the cytosol. Its subcellular location is the cell membrane. The protein resides in the synapse. It is found in the cytoskeleton. The protein localises to the nucleus. It localises to the nucleus speckle. Its subcellular location is the nucleus matrix. The enzyme catalyses a 1,2-diacyl-sn-glycerol + ATP = a 1,2-diacyl-sn-glycero-3-phosphate + ADP + H(+). It catalyses the reaction a 1-O-alkyl-sn-glycerol + ATP = a 1-O-alkyl-sn-glycero-3-phosphate + ADP + H(+). The catalysed reaction is 1-O-alkyl-2-acyl-sn-glycerol + ATP = 1-O-alkyl-2-acyl-sn-glycero-3-phosphate + ADP + H(+). It carries out the reaction 1,2-di-(9Z-octadecenoyl)-sn-glycerol + ATP = 1,2-di-(9Z-octadecenoyl)-sn-glycero-3-phosphate + ADP + H(+). The enzyme catalyses 1-O-hexadecyl-sn-glycerol + ATP = 1-O-hexadecyl-sn-glycero-3-phosphate + ADP + H(+). It catalyses the reaction 1-O-hexadecyl-2-acetyl-sn-glycerol + ATP = 1-O-hexadecyl-2-acetyl-sn-glycero-3-phosphate + ADP + H(+). The catalysed reaction is 1-octadecanoyl-2-(5Z,8Z,11Z,14Z-eicosatetraenoyl)-sn-glycerol + ATP = 1-octadecanoyl-2-(5Z,8Z,11Z,14Z-eicosatetraenoyl)-sn-glycero-3-phosphate + ADP + H(+). It functions in the pathway lipid metabolism; glycerolipid metabolism. With respect to regulation, activated by phosphatidylserine. Its function is as follows. Diacylglycerol kinase that converts diacylglycerol/DAG into phosphatidic acid/phosphatidate/PA and regulates the respective levels of these two bioactive lipids. Thereby, acts as a central switch between the signaling pathways activated by these second messengers with different cellular targets and opposite effects in numerous biological processes. Within the adrenocorticotropic hormone signaling pathway, produces phosphatidic acid which in turn activates NR5A1 and subsequent steroidogenic gene transcription. Also functions downstream of the nerve growth factor signaling pathway being specifically activated in the nucleus by the growth factor. Through its diacylglycerol activity also regulates synaptic vesicle endocytosis. This is Diacylglycerol kinase theta (Dgkq) from Mus musculus (Mouse).